A 353-amino-acid polypeptide reads, in one-letter code: Ribosomal RNA small subunit methyltransferase H (353 aa).

S-adenosyl-L-methionine-binding positions include 39 to 41 (AGH), D58, F90, D108, and Q115. Residues 334 to 353 (SEDGVRGAHGHRRRTQARRG) form a disordered region. The span at 341 to 353 (AHGHRRRTQARRG) shows a compositional bias: basic residues.

It belongs to the methyltransferase superfamily. RsmH family.

It localises to the cytoplasm. It catalyses the reaction cytidine(1402) in 16S rRNA + S-adenosyl-L-methionine = N(4)-methylcytidine(1402) in 16S rRNA + S-adenosyl-L-homocysteine + H(+). In terms of biological role, specifically methylates the N4 position of cytidine in position 1402 (C1402) of 16S rRNA. The polypeptide is Ribosomal RNA small subunit methyltransferase H (Bifidobacterium animalis subsp. lactis (strain AD011)).